A 122-amino-acid polypeptide reads, in one-letter code: Ribosome-binding factor A (122 aa).

It belongs to the RbfA family. As to quaternary structure, monomer. Binds 30S ribosomal subunits, but not 50S ribosomal subunits or 70S ribosomes.

Its subcellular location is the cytoplasm. One of several proteins that assist in the late maturation steps of the functional core of the 30S ribosomal subunit. Associates with free 30S ribosomal subunits (but not with 30S subunits that are part of 70S ribosomes or polysomes). Required for efficient processing of 16S rRNA. May interact with the 5'-terminal helix region of 16S rRNA. The protein is Ribosome-binding factor A of Syntrophomonas wolfei subsp. wolfei (strain DSM 2245B / Goettingen).